A 20-amino-acid polypeptide reads, in one-letter code: Thrombin-like enzyme okinaxobin-2 (20 aa).

In terms of domain architecture, Peptidase S1 spans 1-20 (VVGGDECNINEHRFLVALYY).

The protein belongs to the peptidase S1 family. Snake venom subfamily. In terms of assembly, monomer. Glycosylated. Expressed by the venom gland.

The protein resides in the secreted. With respect to regulation, strongly inactivated by diisopropylfluorophosphate (DFP) and to a lesser extent by tosyl-L-lysine chloromethyl ketone (TLCK). In terms of biological role, thrombin-like snake venom serine protease. Releases both fibrinopeptides A and B from fibrinogen (FGA and FGB) to form fibrin clots. The sequence is that of Thrombin-like enzyme okinaxobin-2 from Ovophis okinavensis (Ryukyu Island pit viper).